The chain runs to 136 residues: Snaclec rhodocytin subunit alpha (136 aa).

3 cysteine pairs are disulfide-bonded: Cys-5-Cys-16, Cys-33-Cys-131, and Cys-106-Cys-123. Residues 12-132 form the C-type lectin domain; the sequence is YDQHCYQAFN…CEQMHAFVCK (121 aa).

This sequence belongs to the snaclec family. Dimer (non-covalently linked) of heterodimers of subunits alpha and beta (disulfide-linked). Expressed by the venom gland.

It is found in the secreted. In terms of biological role, elicits platelet aggregation by the binding to the C-type lectin domain family 1 member B (CLEC1B/CLEC2). Binding leads to tyrosine phosphorylation in the cytoplasmic tail of CLEC1B, which promotes the binding of spleen tyrosine kinase (Syk), subsequent activation of PLC-gamma-2, and platelet activation and aggregation. Binding to GPIbalpha (GP1BA) and alpha-2/beta-1 (ITGA2/ITGB1) may also induce aggregation, but this is controversial. In Calloselasma rhodostoma (Malayan pit viper), this protein is Snaclec rhodocytin subunit alpha.